Reading from the N-terminus, the 206-residue chain is Transmembrane emp24 domain-containing protein bai (206 aa).

The signal sequence occupies residues 1–20; the sequence is MARAALIVCLLMACAWSSHA. The Lumenal portion of the chain corresponds to 21–172; sequence VMFKLSPNTQ…RDTNEKTNSR (152 aa). One can recognise a GOLD domain in the interval 30 to 140; it reads QKCLKEDIQA…LKPLEVDLKR (111 aa). A helical membrane pass occupies residues 173 to 193; sequence VLFFSIFSMCCLLGLATWQVL. Residues 194–206 lie on the Cytoplasmic side of the membrane; that stretch reads YLRRYFKAKKLIE.

The protein belongs to the EMP24/GP25L family.

It is found in the membrane. Its function is as follows. Eca and bai are essential, though not redundant, for dorsoventral patterning of the embryo. Specifically required during early embryogenesis for the activity of maternal tkv, while the zygotic tkv is not affected. The polypeptide is Transmembrane emp24 domain-containing protein bai (Drosophila erecta (Fruit fly)).